The chain runs to 420 residues: Dynein axonemal assembly factor 4 (420 aa).

A CS domain is found at 3–87 (LQVSDYSWQQ…KEAAMWETLS (85 aa)). A mediates interaction with ESR1 and STUB1 region spans residues 7–103 (DYSWQQTKTA…ETMQRIREKS (97 aa)). TPR repeat units follow at residues 290 to 323 (PEWL…NNKM), 324 to 357 (PLLY…LMPP), and 366 to 399 (MKAH…DPSN).

In terms of assembly, interacts with ZMYND10. Interacts with STUB1. Interacts with ESR1 and ESR2. Interacts with DNAAF2. Interacts with CCT3, CCT4, CCT5 and CCT8. Interacts with DNAAF6/PIH1D3.

The protein localises to the nucleus. Its subcellular location is the cytoplasm. The protein resides in the cell projection. It localises to the neuron projection. It is found in the dynein axonemal particle. Its function is as follows. Involved in neuronal migration during development of the cerebral neocortex. May regulate the stability and proteasomal degradation of the estrogen receptors that play an important role in neuronal differentiation, survival and plasticity. Axonemal dynein assembly factor required for ciliary motility. The protein is Dynein axonemal assembly factor 4 of Pongo pygmaeus (Bornean orangutan).